The sequence spans 145 residues: Putative antiporter subunit mnhG2 (145 aa).

Transmembrane regions (helical) follow at residues 11–31 (IAAVMLLLGSFIALISAIGIV), 51–71 (VLLTLIGVLIYFIVNTGFFSV), and 72–92 (RLLLSLVFINLTSPVGMHLVA).

Belongs to the CPA3 antiporters (TC 2.A.63) subunit G family. In terms of assembly, may form a heterooligomeric complex that consists of seven subunits: mnhA2, mnhB2, mnhC2, mnhD2, mnhE2, mnhF2 and mnhG2.

The protein localises to the cell membrane. The polypeptide is Putative antiporter subunit mnhG2 (mnhG2) (Staphylococcus aureus (strain COL)).